Reading from the N-terminus, the 244-residue chain is INO80 complex subunit E (244 aa).

Residues 10-54 (DYKKKYRNLKRKLKFLIYEHECFQEELRKAQRKLLKVSRDKSFLL) adopt a coiled-coil conformation. A disordered region spans residues 63 to 236 (VDEDSSDSDA…SGDDALDGDD (174 aa)). The span at 99–115 (PPLGGAPSPSSLSLPPS) shows a compositional bias: low complexity. Residues 157–171 (RPKREKRPRLPRKLK) show a composition bias toward basic residues. Glycyl lysine isopeptide (Lys-Gly) (interchain with G-Cter in SUMO2) cross-links involve residues K159 and K171. A compositionally biased stretch (pro residues) spans 202 to 212 (PLPPPKMPPPT).

Component of the chromatin remodeling INO80 complex; specifically part of a complex module associated with the N-terminus of INO80.

It localises to the nucleus. Functionally, putative regulatory component of the chromatin remodeling INO80 complex which is involved in transcriptional regulation, DNA replication and probably DNA repair. The chain is INO80 complex subunit E (INO80E) from Homo sapiens (Human).